Here is a 156-residue protein sequence, read N- to C-terminus: Small ribosomal subunit protein uS7 (156 aa).

This sequence belongs to the universal ribosomal protein uS7 family. In terms of assembly, part of the 30S ribosomal subunit. Contacts proteins S9 and S11.

In terms of biological role, one of the primary rRNA binding proteins, it binds directly to 16S rRNA where it nucleates assembly of the head domain of the 30S subunit. Is located at the subunit interface close to the decoding center, probably blocks exit of the E-site tRNA. The chain is Small ribosomal subunit protein uS7 from Pseudomonas fluorescens (strain SBW25).